The chain runs to 699 residues: D-(-)-3-hydroxybutyrate oligomer hydrolase (699 aa).

An N-terminal signal peptide occupies residues 1–33 (MTAIRGGSRRAPGLALALLGGVLLGACHGDENA). Residue serine 311 is the Charge relay system of the active site.

It belongs to the D-(-)-3-hydroxybutyrate oligomer hydrolase family.

The protein localises to the secreted. It carries out the reaction (3R)-hydroxybutanoate dimer + H2O = 2 (R)-3-hydroxybutanoate + H(+). It participates in lipid metabolism; butanoate metabolism. In terms of biological role, participates in the degradation of poly-3-hydroxybutyrate (PHB). It works downstream of poly(3-hydroxybutyrate) depolymerase, hydrolyzing D(-)-3-hydroxybutyrate oligomers of various length (3HB-oligomers) into 3HB-monomers. The polypeptide is D-(-)-3-hydroxybutyrate oligomer hydrolase (Burkholderia mallei (strain NCTC 10247)).